The following is a 441-amino-acid chain: Ribulose bisphosphate carboxylase large chain (441 aa).

Position 5 is an N6,N6,N6-trimethyllysine (Lys-5). Asn-114 and Thr-164 together coordinate substrate. Lys-166 acts as the Proton acceptor in catalysis. Lys-168 is a binding site for substrate. 3 residues coordinate Mg(2+): Lys-192, Asp-194, and Glu-195. The residue at position 192 (Lys-192) is an N6-carboxylysine. The active-site Proton acceptor is His-285. Substrate-binding residues include Arg-286, His-318, and Ser-370.

The protein belongs to the RuBisCO large chain family. Type I subfamily. In terms of assembly, heterohexadecamer of 8 large chains and 8 small chains; disulfide-linked. The disulfide link is formed within the large subunit homodimers. Mg(2+) serves as cofactor. The disulfide bond which can form in the large chain dimeric partners within the hexadecamer appears to be associated with oxidative stress and protein turnover.

It localises to the plastid. It is found in the chloroplast. The catalysed reaction is 2 (2R)-3-phosphoglycerate + 2 H(+) = D-ribulose 1,5-bisphosphate + CO2 + H2O. It carries out the reaction D-ribulose 1,5-bisphosphate + O2 = 2-phosphoglycolate + (2R)-3-phosphoglycerate + 2 H(+). Functionally, ruBisCO catalyzes two reactions: the carboxylation of D-ribulose 1,5-bisphosphate, the primary event in carbon dioxide fixation, as well as the oxidative fragmentation of the pentose substrate in the photorespiration process. Both reactions occur simultaneously and in competition at the same active site. The protein is Ribulose bisphosphate carboxylase large chain of Drosera petiolaris (Woolly sundew).